The following is a 562-amino-acid chain: Cytosolic Fe-S cluster assembly factor nar1 (562 aa).

A [4Fe-4S] cluster-binding site is contributed by C20. The disordered stretch occupies residues 28–47; it reads PKNESSNSQNPYEVTTEDKV. The span at 29–40 shows a compositional bias: polar residues; sequence KNESSNSQNPYE. Residues C62, C65, C68, C214, and C269 each coordinate [4Fe-4S] cluster. The tract at residues 439–462 is disordered; that stretch reads ARVPAASAGGNRRQPISRNSASAG. Residues 452-462 are compositionally biased toward polar residues; sequence QPISRNSASAG. Residues C475 and C479 each coordinate [4Fe-4S] cluster. 2 disordered regions span residues 492–513 and 541–562; these read REASTSTQSVTAVENPSKPTPH and HSPSPSLRGRLGSMKLSSIGLT. Residues 494–505 show a composition bias toward polar residues; it reads ASTSTQSVTAVE.

This sequence belongs to the NARF family.

Functionally, component of the cytosolic Fe/S protein assembly machinery. Required for maturation of extramitochondrial Fe/S proteins. May play a role in the transfer of pre-assembled Fe/S clusters to target apoproteins. The sequence is that of Cytosolic Fe-S cluster assembly factor nar1 (nar1) from Aspergillus flavus (strain ATCC 200026 / FGSC A1120 / IAM 13836 / NRRL 3357 / JCM 12722 / SRRC 167).